The following is a 389-amino-acid chain: Tryptophan synthase beta chain 1 (389 aa).

Residue Lys-84 is modified to N6-(pyridoxal phosphate)lysine.

Belongs to the TrpB family. Tetramer of two alpha and two beta chains. The cofactor is pyridoxal 5'-phosphate.

Its subcellular location is the plastid. It is found in the chloroplast. The catalysed reaction is (1S,2R)-1-C-(indol-3-yl)glycerol 3-phosphate + L-serine = D-glyceraldehyde 3-phosphate + L-tryptophan + H2O. It participates in amino-acid biosynthesis; L-tryptophan biosynthesis; L-tryptophan from chorismate: step 5/5. The beta subunit is responsible for the synthesis of L-tryptophan from indole and L-serine. The protein is Tryptophan synthase beta chain 1 (TSB1) of Zea mays (Maize).